The sequence spans 1048 residues: Putative helicase/primase complex protein (1048 aa).

The segment at 1025–1048 is disordered; that stretch reads STKEESSPTREETSSIKEKTFTET.

Belongs to the asfivirus F1055L family.

Its function is as follows. May be involved in DNA replication. This African swine fever virus (isolate Pig/Kenya/KEN-50/1950) (ASFV) protein is Putative helicase/primase complex protein.